The primary structure comprises 210 residues: 7-carboxy-7-deazaguanine synthase (210 aa).

Substrate-binding positions include 12–14 (LQG) and Arg27. The 193-residue stretch at 18–210 (HAGRASVFCR…VQTHKSLGIR (193 aa)) folds into the Radical SAM core domain. 3 residues coordinate [4Fe-4S] cluster: Cys31, Cys46, and Cys49. Thr51 is a binding site for Mg(2+). Residue Thr90 participates in substrate binding. S-adenosyl-L-methionine is bound by residues Gly92, 133 to 135 (SPK), and 173 to 176 (QPMD).

This sequence belongs to the radical SAM superfamily. 7-carboxy-7-deazaguanine synthase family. As to quaternary structure, homodimer. It depends on [4Fe-4S] cluster as a cofactor. Requires S-adenosyl-L-methionine as cofactor. Mg(2+) is required as a cofactor.

It carries out the reaction 6-carboxy-5,6,7,8-tetrahydropterin + H(+) = 7-carboxy-7-deazaguanine + NH4(+). It functions in the pathway purine metabolism; 7-cyano-7-deazaguanine biosynthesis. Its function is as follows. Catalyzes the complex heterocyclic radical-mediated conversion of 6-carboxy-5,6,7,8-tetrahydropterin (CPH4) to 7-carboxy-7-deazaguanine (CDG), a step common to the biosynthetic pathways of all 7-deazapurine-containing compounds. The polypeptide is 7-carboxy-7-deazaguanine synthase (Bradyrhizobium diazoefficiens (strain JCM 10833 / BCRC 13528 / IAM 13628 / NBRC 14792 / USDA 110)).